Here is a 267-residue protein sequence, read N- to C-terminus: Tryptophan synthase alpha chain (267 aa).

Active-site proton acceptor residues include E49 and D60.

This sequence belongs to the TrpA family. In terms of assembly, tetramer of two alpha and two beta chains.

The catalysed reaction is (1S,2R)-1-C-(indol-3-yl)glycerol 3-phosphate + L-serine = D-glyceraldehyde 3-phosphate + L-tryptophan + H2O. It participates in amino-acid biosynthesis; L-tryptophan biosynthesis; L-tryptophan from chorismate: step 5/5. The alpha subunit is responsible for the aldol cleavage of indoleglycerol phosphate to indole and glyceraldehyde 3-phosphate. This is Tryptophan synthase alpha chain from Rippkaea orientalis (strain PCC 8801 / RF-1) (Cyanothece sp. (strain PCC 8801)).